We begin with the raw amino-acid sequence, 92 residues long: Small ribosomal subunit protein uS19 (92 aa).

This sequence belongs to the universal ribosomal protein uS19 family.

Functionally, protein S19 forms a complex with S13 that binds strongly to the 16S ribosomal RNA. The polypeptide is Small ribosomal subunit protein uS19 (Bartonella bacilliformis (strain ATCC 35685 / KC583 / Herrer 020/F12,63)).